A 410-amino-acid polypeptide reads, in one-letter code: Peptidase T (410 aa).

H78 is a binding site for Zn(2+). D80 is a catalytic residue. Residue D140 coordinates Zn(2+). E173 acts as the Proton acceptor in catalysis. Zn(2+) is bound by residues E174, D196, and H379.

Belongs to the peptidase M20B family. Zn(2+) is required as a cofactor.

It localises to the cytoplasm. The enzyme catalyses Release of the N-terminal residue from a tripeptide.. Cleaves the N-terminal amino acid of tripeptides. The chain is Peptidase T from Pectobacterium atrosepticum (strain SCRI 1043 / ATCC BAA-672) (Erwinia carotovora subsp. atroseptica).